Here is a 216-residue protein sequence, read N- to C-terminus: GTP cyclohydrolase-2 (216 aa).

51 to 55 (RIHSE) is a binding site for GTP. The Zn(2+) site is built by Cys56, Cys67, and Cys69. GTP is bound by residues Gln72, 94-96 (EGR), and Thr116. Catalysis depends on Asp128, which acts as the Proton acceptor. Residue Arg130 is the Nucleophile of the active site. The GTP site is built by Thr151 and Lys156.

The protein belongs to the GTP cyclohydrolase II family. Zn(2+) is required as a cofactor.

The catalysed reaction is GTP + 4 H2O = 2,5-diamino-6-hydroxy-4-(5-phosphoribosylamino)-pyrimidine + formate + 2 phosphate + 3 H(+). Its pathway is cofactor biosynthesis; riboflavin biosynthesis; 5-amino-6-(D-ribitylamino)uracil from GTP: step 1/4. Catalyzes the conversion of GTP to 2,5-diamino-6-ribosylamino-4(3H)-pyrimidinone 5'-phosphate (DARP), formate and pyrophosphate. The sequence is that of GTP cyclohydrolase-2 from Haemophilus influenzae (strain PittEE).